The sequence spans 224 residues: 7-cyano-7-deazaguanine synthase (224 aa).

Residue 10–20 (LSGGLDSATVV) participates in ATP binding. Zn(2+) is bound by residues Cys-189, Cys-199, Cys-202, and Cys-205.

This sequence belongs to the QueC family. Zn(2+) is required as a cofactor.

It carries out the reaction 7-carboxy-7-deazaguanine + NH4(+) + ATP = 7-cyano-7-deazaguanine + ADP + phosphate + H2O + H(+). It functions in the pathway purine metabolism; 7-cyano-7-deazaguanine biosynthesis. Functionally, catalyzes the ATP-dependent conversion of 7-carboxy-7-deazaguanine (CDG) to 7-cyano-7-deazaguanine (preQ(0)). This chain is 7-cyano-7-deazaguanine synthase, found in Ectopseudomonas mendocina (strain ymp) (Pseudomonas mendocina).